Reading from the N-terminus, the 143-residue chain is Large ribosomal subunit protein uL11 (143 aa).

It belongs to the universal ribosomal protein uL11 family. Part of the ribosomal stalk of the 50S ribosomal subunit. Interacts with L10 and the large rRNA to form the base of the stalk. L10 forms an elongated spine to which L12 dimers bind in a sequential fashion forming a multimeric L10(L12)X complex. Post-translationally, one or more lysine residues are methylated.

Functionally, forms part of the ribosomal stalk which helps the ribosome interact with GTP-bound translation factors. The polypeptide is Large ribosomal subunit protein uL11 (Burkholderia multivorans (strain ATCC 17616 / 249)).